The chain runs to 216 residues: Large ribosomal subunit protein eL15 (216 aa).

Belongs to the eukaryotic ribosomal protein eL15 family.

The protein is Large ribosomal subunit protein eL15 of Metallosphaera sedula (strain ATCC 51363 / DSM 5348 / JCM 9185 / NBRC 15509 / TH2).